A 245-amino-acid chain; its full sequence is 1-(5-phosphoribosyl)-5-[(5-phosphoribosylamino)methylideneamino] imidazole-4-carboxamide isomerase (245 aa).

Catalysis depends on Asp7, which acts as the Proton acceptor. Catalysis depends on Asp129, which acts as the Proton donor.

The protein belongs to the HisA/HisF family.

It localises to the cytoplasm. The catalysed reaction is 1-(5-phospho-beta-D-ribosyl)-5-[(5-phospho-beta-D-ribosylamino)methylideneamino]imidazole-4-carboxamide = 5-[(5-phospho-1-deoxy-D-ribulos-1-ylimino)methylamino]-1-(5-phospho-beta-D-ribosyl)imidazole-4-carboxamide. Its pathway is amino-acid biosynthesis; L-histidine biosynthesis; L-histidine from 5-phospho-alpha-D-ribose 1-diphosphate: step 4/9. This Escherichia coli (strain 55989 / EAEC) protein is 1-(5-phosphoribosyl)-5-[(5-phosphoribosylamino)methylideneamino] imidazole-4-carboxamide isomerase.